The primary structure comprises 206 residues: Probable 5-formyltetrahydrofolate cyclo-ligase (206 aa).

ATP is bound by residues 8–12 and arginine 12; that span reads KSELR. Substrate is bound by residues valine 54, glutamate 59, and 146–150; that span reads HGKGY. 143 to 151 serves as a coordination point for ATP; the sequence is RCGHGKGYY. Mg(2+)-binding residues include aspartate 152 and aspartate 188.

The protein belongs to the 5-formyltetrahydrofolate cyclo-ligase family. In terms of assembly, monomer. Requires Mg(2+) as cofactor.

The protein resides in the cytoplasm. The enzyme catalyses (6S)-5-formyl-5,6,7,8-tetrahydrofolate + ATP = (6R)-5,10-methenyltetrahydrofolate + ADP + phosphate. In terms of biological role, contributes to tetrahydrofolate metabolism. Helps regulate carbon flow through the folate-dependent one-carbon metabolic network that supplies carbon for the biosynthesis of purines, thymidine and amino acids. Catalyzes the irreversible conversion of 5-formyltetrahydrofolate (5-CHO-H(4)PteGlu) to yield 5,10-methenyltetrahydrofolate. This is Probable 5-formyltetrahydrofolate cyclo-ligase from Caenorhabditis elegans.